A 362-amino-acid chain; its full sequence is Alternative oxidase, mitochondrial (362 aa).

The N-terminal 64 residues, 1–64, are a transit peptide targeting the mitochondrion; the sequence is MNTPKVNILY…RGFTTTSVVR (64 aa). Residues 156 to 176 form a helical membrane-spanning segment; the sequence is LVRFIFLESIAGVPGMVAGML. Positions 163, 202, and 205 each coordinate Fe cation. The chain crosses the membrane as a helical span at residues 222 to 242; sequence LILGAQGVFFNAMFLSYLVSP. Residues glutamate 253, glutamate 310, and histidine 313 each contribute to the Fe cation site.

It belongs to the alternative oxidase family. Requires Fe cation as cofactor.

It is found in the mitochondrion inner membrane. In terms of biological role, catalyzes cyanide-resistant oxygen consumption. May increase respiration when the cytochrome respiratory pathway is restricted, or in response to low temperatures. The polypeptide is Alternative oxidase, mitochondrial (aod-1) (Gelasinospora sp. (strain S23)).